We begin with the raw amino-acid sequence, 148 residues long: Large ribosomal subunit protein bL9 (148 aa).

It belongs to the bacterial ribosomal protein bL9 family.

Its function is as follows. Binds to the 23S rRNA. The polypeptide is Large ribosomal subunit protein bL9 (Finegoldia magna (strain ATCC 29328 / DSM 20472 / WAL 2508) (Peptostreptococcus magnus)).